Here is a 289-residue protein sequence, read N- to C-terminus: Polyamine aminopropyltransferase (289 aa).

One can recognise a PABS domain in the interval 5-238 (TVWHETLHDQ…GIMTFAWATD (234 aa)). Glutamine 33 contacts S-methyl-5'-thioadenosine. Spermidine-binding residues include histidine 64 and aspartate 88. S-methyl-5'-thioadenosine contacts are provided by residues glutamate 108 and 140 to 141 (DG). Aspartate 158 functions as the Proton acceptor in the catalytic mechanism. 158 to 161 (DCTD) lines the spermidine pocket. Residue proline 165 participates in S-methyl-5'-thioadenosine binding.

This sequence belongs to the spermidine/spermine synthase family. As to quaternary structure, homodimer or homotetramer.

It localises to the cytoplasm. It catalyses the reaction S-adenosyl 3-(methylsulfanyl)propylamine + putrescine = S-methyl-5'-thioadenosine + spermidine + H(+). The protein operates within amine and polyamine biosynthesis; spermidine biosynthesis; spermidine from putrescine: step 1/1. Its function is as follows. Catalyzes the irreversible transfer of a propylamine group from the amino donor S-adenosylmethioninamine (decarboxy-AdoMet) to putrescine (1,4-diaminobutane) to yield spermidine. The sequence is that of Polyamine aminopropyltransferase from Enterobacter sp. (strain 638).